The primary structure comprises 122 residues: Large ribosomal subunit protein uL14c (122 aa).

The protein belongs to the universal ribosomal protein uL14 family. In terms of assembly, part of the 50S ribosomal subunit.

It is found in the plastid. The protein localises to the chloroplast. Functionally, binds to 23S rRNA. This chain is Large ribosomal subunit protein uL14c, found in Illicium oligandrum (Star anise).